The primary structure comprises 129 residues: MARVKRAVNAQKKRRTVLEQASGYRGQRSRLYRKAKEQVTHSLVYAYRDRKARKGDFRRLWIQRINAAARAEGMTYNRFIQGLKAAEIEVDRRMLAELAVSDPAAFGALVRTAKAALPVAPVAAEGTAA.

It belongs to the bacterial ribosomal protein bL20 family.

Its function is as follows. Binds directly to 23S ribosomal RNA and is necessary for the in vitro assembly process of the 50S ribosomal subunit. It is not involved in the protein synthesizing functions of that subunit. This Kineococcus radiotolerans (strain ATCC BAA-149 / DSM 14245 / SRS30216) protein is Large ribosomal subunit protein bL20.